Reading from the N-terminus, the 564-residue chain is Solute carrier family 22 member 21 (564 aa).

At 1–20 the chain is on the cytoplasmic side; it reads MLDYDEVTAFLGEWGTFQRL. The helical transmembrane segment at 21–41 threads the bilayer; it reads IFFLLSASIIPNGFTGLSAVF. At 42 to 142 the chain is on the extracellular side; sequence LTAIPEHRCR…DLVCKDDWKA (101 aa). N-linked (GlcNAc...) asparagine glycans are attached at residues Asn-57, Asn-64, and Asn-91. Residues 143-163 traverse the membrane as a helical segment; sequence PLTTSFFYVGVLLGSFISGQL. The Cytoplasmic portion of the chain corresponds to 164–172; the sequence is SDRFGRKNI. A helical transmembrane segment spans residues 173 to 193; that stretch reads LFLTMAMHTGFSFIQVFSVNF. At 194–197 the chain is on the extracellular side; sequence EMFT. A helical transmembrane segment spans residues 198 to 218; it reads LLYTLVGMGHISNYVAAFVLG. 218–225 lines the ATP pocket; it reads GTEMLSKS. At 219–232 the chain is on the cytoplasmic side; that stretch reads TEMLSKSVRIIFAT. Residues 233–253 traverse the membrane as a helical segment; the sequence is LGVCIFFAFGFMVLPLFAYFI. Residues 254–257 lie on the Extracellular side of the membrane; it reads REWR. A helical transmembrane segment spans residues 258-278; the sequence is RLLLAITLPGVLCGALWWFIP. Residues 279–344 lie on the Cytoplasmic side of the membrane; that stretch reads ESPRWLISQG…YDLVRTPNIR (66 aa). A helical transmembrane segment spans residues 345 to 365; that stretch reads ILTIMSIILWLTISVGYFGLS. At 366-376 the chain is on the extracellular side; the sequence is LDTPNLNGNIY. A helical membrane pass occupies residues 377 to 397; sequence VNCFLLAAVEVPAYVLAWLLL. Residues 398 to 409 lie on the Cytoplasmic side of the membrane; the sequence is QHVSRRYSMAGS. Residues 410 to 430 traverse the membrane as a helical segment; sequence LFLGGSVLLLVQLVPSDLHYL. Residues 431–433 lie on the Extracellular side of the membrane; that stretch reads STT. Residues 434–454 form a helical membrane-spanning segment; that stretch reads LVMVGKFGITSAYSMVYVYTA. Residues 455-465 are Cytoplasmic-facing; that stretch reads ELYPTVVRNMG. The chain crosses the membrane as a helical span at residues 466–486; sequence VGVSSTASRLGSILSPYFVYL. The Extracellular portion of the chain corresponds to 487-491; sequence GAYDR. Residues 492–512 traverse the membrane as a helical segment; it reads RLPYILMGSLTILTAIITLFF. Residues 513-564 lie on the Cytoplasmic side of the membrane; sequence PESSGVSLPETIDEMQKVKKLKQRQSLSKKGSPKESKGNVSRTSRTSEPKGF. Residues 532–564 form a disordered region; that stretch reads KLKQRQSLSKKGSPKESKGNVSRTSRTSEPKGF.

Belongs to the major facilitator (TC 2.A.1) superfamily. Organic cation transporter (TC 2.A.1.19) family. Predominantly expressed in testis.

The protein localises to the peroxisome membrane. Sodium-ion independent, medium affinity carnitine transporter. Also transports organic cations such as tetraethylammonium (TEA) without the involvement of sodium. Relative uptake activity ratio of carnitine to TEA is 746. This Mus musculus (Mouse) protein is Solute carrier family 22 member 21 (Slc22a21).